The following is a 203-amino-acid chain: Urease accessory protein UreG (203 aa).

GTP is bound at residue 11 to 18 (GPVGSGKT).

It belongs to the SIMIBI class G3E GTPase family. UreG subfamily. As to quaternary structure, homodimer. UreD, UreF and UreG form a complex that acts as a GTP-hydrolysis-dependent molecular chaperone, activating the urease apoprotein by helping to assemble the nickel containing metallocenter of UreC. The UreE protein probably delivers the nickel.

It localises to the cytoplasm. Its function is as follows. Facilitates the functional incorporation of the urease nickel metallocenter. This process requires GTP hydrolysis, probably effectuated by UreG. The polypeptide is Urease accessory protein UreG (Prochlorococcus marinus (strain MIT 9215)).